The sequence spans 684 residues: Threonine--tRNA ligase (684 aa).

One can recognise a TGS domain in the interval 1-66; sequence MTVPATDSCP…DTDAEVVPVA (66 aa). The tract at residues 261-567 is catalytic; it reads DHRKLGSELD…LTEHYAGAFP (307 aa). Residues cysteine 366, histidine 417, and histidine 544 each contribute to the Zn(2+) site.

It belongs to the class-II aminoacyl-tRNA synthetase family. In terms of assembly, homodimer. It depends on Zn(2+) as a cofactor.

Its subcellular location is the cytoplasm. The enzyme catalyses tRNA(Thr) + L-threonine + ATP = L-threonyl-tRNA(Thr) + AMP + diphosphate + H(+). Functionally, catalyzes the attachment of threonine to tRNA(Thr) in a two-step reaction: L-threonine is first activated by ATP to form Thr-AMP and then transferred to the acceptor end of tRNA(Thr). Also edits incorrectly charged L-seryl-tRNA(Thr). The sequence is that of Threonine--tRNA ligase from Mycolicibacterium paratuberculosis (strain ATCC BAA-968 / K-10) (Mycobacterium paratuberculosis).